Consider the following 398-residue polypeptide: Phosphoglycerate kinase (398 aa).

Residues 23–25, arginine 38, 61–64, arginine 120, and arginine 153 contribute to the substrate site; these read DLN and HFGR. Residues lysine 203, glutamate 325, and 355–358 each bind ATP; that span reads GGDT.

This sequence belongs to the phosphoglycerate kinase family. Monomer.

Its subcellular location is the cytoplasm. The catalysed reaction is (2R)-3-phosphoglycerate + ATP = (2R)-3-phospho-glyceroyl phosphate + ADP. It functions in the pathway carbohydrate degradation; glycolysis; pyruvate from D-glyceraldehyde 3-phosphate: step 2/5. This is Phosphoglycerate kinase from Sphingopyxis alaskensis (strain DSM 13593 / LMG 18877 / RB2256) (Sphingomonas alaskensis).